A 220-amino-acid polypeptide reads, in one-letter code: Competence protein ComFC (220 aa).

This sequence belongs to the ComF/GntX family. As to quaternary structure, monomer and dimer in solution. Interacts with ComFA and DprA; ComFA-ComFC form rings about 150 Angstroms in diameter with apparent 6-fold symmetry.

Involved in transformation (genetic competence for DNA uptake). This chain is Competence protein ComFC, found in Streptococcus pneumoniae (strain ATCC BAA-255 / R6).